We begin with the raw amino-acid sequence, 549 residues long: Urocanate hydratase (549 aa).

Residues 46-47, Gln124, Glu190, Arg195, 236-237, 257-261, 267-268, and Tyr316 contribute to the NAD(+) site; these read GG, NA, QTSAH, and YV. Cys404 is an active-site residue. Gly486 serves as a coordination point for NAD(+).

The protein belongs to the urocanase family. Requires NAD(+) as cofactor.

Its subcellular location is the cytoplasm. The catalysed reaction is 4-imidazolone-5-propanoate = trans-urocanate + H2O. Its pathway is amino-acid degradation; L-histidine degradation into L-glutamate; N-formimidoyl-L-glutamate from L-histidine: step 2/3. Functionally, catalyzes the conversion of urocanate to 4-imidazolone-5-propionate. This chain is Urocanate hydratase, found in Thermoanaerobacter pseudethanolicus (strain ATCC 33223 / 39E) (Clostridium thermohydrosulfuricum).